We begin with the raw amino-acid sequence, 423 residues long: Putative galacturan 1,4-alpha-galacturonidase C (423 aa).

A signal peptide spans 1–20 (MRFSIISLVSLPLFLGLTYA). Residues Asn100, Asn120, Asn150, Asn173, and Asn185 are each glycosylated (N-linked (GlcNAc...) asparagine). Asp229 functions as the Proton donor in the catalytic mechanism. An intrachain disulfide couples Cys231 to Cys248. N-linked (GlcNAc...) asparagine glycosylation is present at Asn245. Asn252 is an active-site residue. Asn344 and Asn362 each carry an N-linked (GlcNAc...) asparagine glycan. Cys379 and Cys385 are joined by a disulfide. N-linked (GlcNAc...) asparagine glycosylation is present at Asn400. A disulfide bond links Cys409 and Cys423.

This sequence belongs to the glycosyl hydrolase 28 family.

It is found in the secreted. The catalysed reaction is [(1-&gt;4)-alpha-D-galacturonosyl](n) + H2O = alpha-D-galacturonate + [(1-&gt;4)-alpha-D-galacturonosyl](n-1). In terms of biological role, specific in hydrolyzing the terminal glycosidic bond of polygalacturonic acid and oligogalacturonates. The protein is Putative galacturan 1,4-alpha-galacturonidase C (rgxC) of Neosartorya fischeri (strain ATCC 1020 / DSM 3700 / CBS 544.65 / FGSC A1164 / JCM 1740 / NRRL 181 / WB 181) (Aspergillus fischerianus).